The chain runs to 1087 residues: Exportin-7 (1087 aa).

Positions 30 to 96 (AEKALVEFTN…RNYVLNYLAT (67 aa)) constitute an Importin N-terminal domain.

It belongs to the exportin family.

It localises to the cytoplasm. Its subcellular location is the nucleus. Functionally, mediates the nuclear export of proteins (cargos) with broad substrate specificity. This is Exportin-7 (XPO7) from Gallus gallus (Chicken).